The sequence spans 145 residues: 3-hydroxyacyl-[acyl-carrier-protein] dehydratase FabZ (145 aa).

Histidine 49 is an active-site residue.

Belongs to the thioester dehydratase family. FabZ subfamily.

It is found in the cytoplasm. The catalysed reaction is a (3R)-hydroxyacyl-[ACP] = a (2E)-enoyl-[ACP] + H2O. Its function is as follows. Involved in unsaturated fatty acids biosynthesis. Catalyzes the dehydration of short chain beta-hydroxyacyl-ACPs and long chain saturated and unsaturated beta-hydroxyacyl-ACPs. The protein is 3-hydroxyacyl-[acyl-carrier-protein] dehydratase FabZ of Rickettsia conorii (strain ATCC VR-613 / Malish 7).